Consider the following 94-residue polypeptide: Co-chaperonin GroES (94 aa).

The protein belongs to the GroES chaperonin family. As to quaternary structure, heptamer of 7 subunits arranged in a ring. Interacts with the chaperonin GroEL.

The protein localises to the cytoplasm. Its function is as follows. Together with the chaperonin GroEL, plays an essential role in assisting protein folding. The GroEL-GroES system forms a nano-cage that allows encapsulation of the non-native substrate proteins and provides a physical environment optimized to promote and accelerate protein folding. GroES binds to the apical surface of the GroEL ring, thereby capping the opening of the GroEL channel. This chain is Co-chaperonin GroES, found in Listeria innocua serovar 6a (strain ATCC BAA-680 / CLIP 11262).